A 134-amino-acid chain; its full sequence is UPF0357 protein AAL017W (134 aa).

A signal peptide spans 1–23 (MFGLISLWHLFWLAVMAGILVVA).

The protein belongs to the UPF0357 family.

This Eremothecium gossypii (strain ATCC 10895 / CBS 109.51 / FGSC 9923 / NRRL Y-1056) (Yeast) protein is UPF0357 protein AAL017W.